A 726-amino-acid polypeptide reads, in one-letter code: Probable pre-mRNA-splicing factor ATP-dependent RNA helicase DEAH2 (726 aa).

The Helicase ATP-binding domain maps to 71 to 240; it reads LKTLNNNQTL…FSGAPLMKVP (170 aa). 84 to 91 lines the ATP pocket; that stretch reads GETGSGKT. Positions 187–190 match the DEAH box motif; it reads DEAH. Residues 265-445 form the Helicase C-terminal domain; sequence TVVQIHMCEP…NTVLTLKKLG (181 aa).

The protein belongs to the DEAD box helicase family. DEAH subfamily. PRP43 sub-subfamily.

It carries out the reaction ATP + H2O = ADP + phosphate + H(+). May be involved in pre-mRNA splicing. The chain is Probable pre-mRNA-splicing factor ATP-dependent RNA helicase DEAH2 from Arabidopsis thaliana (Mouse-ear cress).